The sequence spans 473 residues: MGRKKIQITRIMDERNRQVTFTKRKFGLMKKAYELSVLCDCEIALIIFNSTNKLFQYASTDMDKVLLKYTEYNEPHESRTNSDIVETLRKKGLNGCDSPDPDADDSVGHSPESEDKYRKINEDIDLMISRQRLCAVPPPNFEMPVTIPVSSHNSLVYSNPVSSLGNPNLLPLAHPSLQRNSMSPGVTHRPPSAGNTGGLMGGDLTSGAGTSAGNGYGNPRNSPGLLVSPGNLNKNIQAKSPPPMNLGMNNRKPDLRVLIPPGSKNTMPSVSEDVDLLLNQRINNSQSAQSLATPVVSVATPTLPGQGMGGYPSAISTTYGTEYSLSSADLSSLSGFNTASALHLGSVTGWQQQHLHNMPPSALSQLGACTSTHLSQSSNLSLPSTQSLNIKSEPVSPPRDRTTTPSRYPQHTRHEAGRSPVDSLSSCSSSYDGSDREDHRNEFHSPIGLTRPSPDERESPSVKRMRLSEGWAT.

The 61-residue stretch at 1–61 (MGRKKIQITR…NKLFQYASTD (61 aa)) folds into the MADS-box domain. Lys4 carries the N6-acetyllysine modification. Residues 58-86 (ASTDMDKVLLKYTEYNEPHESRTNSDIVE) constitute a DNA-binding region (mef2-type). Ser59 is subject to Phosphoserine; by CK2. Residues 91 to 116 (KGLNGCDSPDPDADDSVGHSPESEDK) are disordered. Phosphoserine occurs at positions 98, 106, and 110. 2 positions are modified to N6-acetyllysine: Lys116 and Lys119. Positions 180–206 (NSMSPGVTHRPPSAGNTGGLMGGDLTS) are disordered. Ser222 and Ser228 each carry phosphoserine. N6-acetyllysine is present on residues Lys234 and Lys239. Ser240 carries the phosphoserine modification. N6-acetyllysine occurs at positions 252 and 264. Residues 271 to 278 (SEDVDLLL) are beta domain. Phosphothreonine; by MAPK14 is present on residues Thr293 and Thr300. The tract at residues 368 to 399 (ACTSTHLSQSSNLSLPSTQSLNIKSEPVSPPR) is transcription repressor. The span at 375–390 (SQSSNLSLPSTQSLNI) shows a compositional bias: polar residues. The disordered stretch occupies residues 375-473 (SQSSNLSLPS…RMRLSEGWAT (99 aa)). Lys391 is covalently cross-linked (Glycyl lysine isopeptide (Lys-Gly) (interchain with G-Cter in SUMO)). Ser396 carries the post-translational modification Phosphoserine; by CDK5. Ser419 carries the post-translational modification Phosphoserine; by MAPK7. The span at 419–432 (SPVDSLSSCSSSYD) shows a compositional bias: low complexity. Over residues 433–443 (GSDREDHRNEF) the composition is skewed to basic and acidic residues. Phosphoserine is present on Ser445.

Belongs to the MEF2 family. Forms a complex with class II HDACs in undifferentiating cells. On myogenic differentiation, HDACs are released into the cytoplasm allowing MEF2s to interact with other proteins for activation. Interacts with EP300 in differentiating cells; the interaction acetylates MEF2C leading to increased DNA binding and activation. Interacts with HDAC7 and CARM1. Interacts with HDAC4 and HDAC9; the interaction with HDACs represses transcriptional activity. Interacts with LPIN1. Interacts with MYOCD. Interacts with AKAP13. Interacts with FOXK1; the interaction inhibits MEF2C transactivation activity. Interacts (via N-terminus) with HABP4; this interaction decreases DNA-binding activity of MEF2C in myocardial cells in response to mechanical stress. Interacts with JPH2; interaction specifically takes place with the Junctophilin-2 N-terminal fragment cleavage product of JPH2. Interacts (via MADS box) with SOX18. Interacts with PHF7; the interaction promotes MEF2C binding to its transcription targets. Post-translationally, phosphorylated on Ser-59; which enhances DNA binding activity. Phosphorylated on Ser-396; which is required for Lys-391 sumoylation and inhibits transcriptional activity. In terms of processing, acetylated by p300 on several sites in diffentiating myocytes. Acetylation on Lys-4 increases DNA binding and transactivation. Sumoylated on Lys-391 with SUMO2 but not SUMO1; which represses transcriptional activity. Post-translationally, proteolytically cleaved in cerebellar granule neurons on several sites by caspase 3 and caspase 7 following neurotoxicity. Preferentially cleaves the CDK5-mediated hyperphosphorylated form which leads to neuron apoptosis and transcriptional inactivation. As to expression, expressed in the heart. Expressed in cardiac myocytes (at protein level).

It is found in the nucleus. The protein localises to the cytoplasm. Its subcellular location is the sarcoplasm. Transcription activator which binds specifically to the MEF2 element present in the regulatory regions of many muscle-specific genes. Controls cardiac morphogenesis and myogenesis, and is also involved in vascular development. Enhances transcriptional activation mediated by SOX18. Plays an essential role in hippocampal-dependent learning and memory by suppressing the number of excitatory synapses and thus regulating basal and evoked synaptic transmission. Crucial for normal neuronal development, distribution, and electrical activity in the neocortex. Necessary for proper development of megakaryocytes and platelets and for bone marrow B-lymphopoiesis. Required for B-cell survival and proliferation in response to BCR stimulation, efficient IgG1 antibody responses to T-cell-dependent antigens and for normal induction of germinal center B-cells. May also be involved in neurogenesis and in the development of cortical architecture. The protein is Myocyte-specific enhancer factor 2C of Rattus norvegicus (Rat).